A 282-amino-acid polypeptide reads, in one-letter code: Undecaprenyl-diphosphatase (282 aa).

The next 6 helical transmembrane spans lie at 51–71, 87–107, 115–135, 191–211, 229–249, and 259–279; these read TLVAVLLYFWKDIFIIVAAVI, MGWMIVAGTIPIVIFGKLFET, SLYWISGSLIGLAIILFLAEG, ATAARFSFLLSLPAVFAAGLY, NILVATLVAGIVGYASIAFLL, and IFIAYRLVAGTAILYLVATGV.

It belongs to the UppP family.

Its subcellular location is the cell inner membrane. It carries out the reaction di-trans,octa-cis-undecaprenyl diphosphate + H2O = di-trans,octa-cis-undecaprenyl phosphate + phosphate + H(+). Catalyzes the dephosphorylation of undecaprenyl diphosphate (UPP). Confers resistance to bacitracin. The sequence is that of Undecaprenyl-diphosphatase from Pelodictyon phaeoclathratiforme (strain DSM 5477 / BU-1).